We begin with the raw amino-acid sequence, 414 residues long: MTENNNLVTSTQGIIKEALHKLGFDEGMYDLIKEPLRMLQVRIPVRMDDGTVKTFTGYRAQHNDAVGPTKGGVRFHPDVDEEEVKALSMWMTLKCGIVNLPYGGGKGGIVCDPRQMSIHEVERLSRGYVRAISQFVGPNKDIPAPDVFTNSQIMAWMMDEYSALDKFNSPGFITGKPIVLGGSHGRDRSTALGVVIAIEQAAKRRNMQIEGAKVVIQGFGNAGSFLAKFLYDLGAKIVGISDAYGALHDPNGLDIDYLLDRRDSFGTVTNLFEETISNKELFELDCDILVPAAISNQITEDNAHDIKASIVVEAANGPTTPEATRILTERGILLVPDVLASAGGVTVSYFEWVQNNQGYYWSEEEVNEKLREKLEAAFDTIYELSQNRKIDMRLAAYIIGIKRTAEAARYRGWA.

Substrate-binding residues include Lys70 and Lys94. Lys106 acts as the Proton donor in catalysis. Residues Thr190 and Asn221 each coordinate NAD(+). Residue Ser348 coordinates substrate.

The protein belongs to the Glu/Leu/Phe/Val dehydrogenases family. Homohexamer.

It catalyses the reaction L-glutamate + NAD(+) + H2O = 2-oxoglutarate + NH4(+) + NADH + H(+). The chain is NAD-specific glutamate dehydrogenase (gluD) from Staphylococcus aureus (strain COL).